The chain runs to 320 residues: Pyrroline-5-carboxylate reductase 1, mitochondrial (320 aa).

Serine 2 is subject to N-acetylserine. NADP(+) contacts are provided by residues 6–11 (IGAGQL) and serine 34. NADPH is bound by residues alanine 8, glutamine 10, leucine 11, serine 34, aspartate 36, asparagine 56, valine 70, lysine 71, and alanine 97. Residues asparagine 56, 69 to 72 (AVKP), and 95 to 97 (CAA) each bind NADP(+). An L-proline-binding site is contributed by glutamate 164. Asparagine 230 is a binding site for NADPH. Alanine 237 and threonine 238 together coordinate L-proline. Phosphoserine is present on serine 278. A disordered region spans residues 292–320 (LDSPPGTSLAPSGHSKLLPRSMAPAGKQD).

It belongs to the pyrroline-5-carboxylate reductase family. In terms of assembly, homodecamer; composed of 5 homodimers. Interacts with LTO1.

It localises to the mitochondrion. The enzyme catalyses L-proline + NADP(+) = (S)-1-pyrroline-5-carboxylate + NADPH + 2 H(+). The catalysed reaction is L-proline + NAD(+) = (S)-1-pyrroline-5-carboxylate + NADH + 2 H(+). It participates in amino-acid biosynthesis; L-proline biosynthesis; L-proline from L-glutamate 5-semialdehyde: step 1/1. Functionally, oxidoreductase that catalyzes the last step in proline biosynthesis, which corresponds to the reduction of pyrroline-5-carboxylate to L-proline using NAD(P)H. At physiologic concentrations, has higher specific activity in the presence of NADH. Involved in the cellular response to oxidative stress. In Bos taurus (Bovine), this protein is Pyrroline-5-carboxylate reductase 1, mitochondrial (PYCR1).